The primary structure comprises 921 residues: AdoMet-dependent rRNA methyltransferase SPB1 (921 aa).

Residues Gly58, Trp60, Asp78, Asp94, and Asp119 each contribute to the S-adenosyl-L-methionine site. Catalysis depends on Lys159, which acts as the Proton acceptor. The stretch at 367 to 414 (VEEMDEDDQIDDELARLNEEAARKARKERRRKNELRQKKILKMQLQMT) forms a coiled coil. Disordered stretches follow at residues 448–476 (ALIQQADVSDDESETIVSSQHTDDDDPET), 491–604 (EFKQ…KRSL), 635–713 (ELDE…GKQK), 814–835 (LEKAQKKAETINENEDISEKEK), and 866–921 (RGLK…GPRN). A compositionally biased stretch (basic and acidic residues) spans 491–522 (EFKQKQSERDAKFRAKQARLQDAKNDSWHGIK). 4 stretches are compositionally biased toward acidic residues: residues 523–542 (DDEENDEDDDEANLSDESEG), 555–568 (ETFDTDDEEDEEDE), 635–684 (ELDE…DDFE), and 697–708 (DEEWDLNGEDEE). Positions 796–835 (IKKVAEAKARKKMRTLRRLEKAQKKAETINENEDISEKEK) form a coiled coil. Over residues 814–823 (LEKAQKKAET) the composition is skewed to basic and acidic residues. A compositionally biased stretch (basic residues) spans 868-879 (LKGRPKGTKGRY). The segment covering 880 to 892 (KMVDPRMKKELRA) has biased composition (basic and acidic residues).

The protein belongs to the class I-like SAM-binding methyltransferase superfamily. RNA methyltransferase RlmE family. SPB1 subfamily. Component of the nucleolar and nucleoplasmic pre-60S ribosomal particle.

It localises to the nucleus. Its subcellular location is the nucleolus. It catalyses the reaction a ribonucleotide in rRNA + S-adenosyl-L-methionine = a 2'-O-methylribonucleotide in rRNA + S-adenosyl-L-homocysteine + H(+). Required for proper assembly of pre-ribosomal particles during the biogenesis of the 60S ribosomal subunit. The chain is AdoMet-dependent rRNA methyltransferase SPB1 from Mycosarcoma maydis (Corn smut fungus).